A 281-amino-acid polypeptide reads, in one-letter code: MNSNIEKSDKPSFIKISEQPSLYDDLEKKSVREILEDINKEDQKVAIAVQKAIPQIEKLVTQIVPRMKQGGRIFYMGAGTSGRLGVLDASEIPPTFGMPPTLIIGLIAGGDTALRNPVENAEDNTIRGWEELTEHNINDKDTVIGIAASGTTPYVIGAMHAAREHGILTGCITSNPNSPMAAEADIPIEMIVGPEYVTGSSRMKSGTGQKMILNMITTSVMIQLGRVKGNKMVNMQLSNRKLVDRGTRMIIEELGLEYDKAKALLLMHGSVKKAIDAYKAG.

In terms of domain architecture, SIS spans 63–226 (IVPRMKQGGR…TTSVMIQLGR (164 aa)). The active-site Proton donor is glutamate 91. Glutamate 122 is an active-site residue.

This sequence belongs to the GCKR-like family. MurNAc-6-P etherase subfamily. Homodimer.

It carries out the reaction N-acetyl-D-muramate 6-phosphate + H2O = N-acetyl-D-glucosamine 6-phosphate + (R)-lactate. It participates in amino-sugar metabolism; N-acetylmuramate degradation. In terms of biological role, specifically catalyzes the cleavage of the D-lactyl ether substituent of MurNAc 6-phosphate, producing GlcNAc 6-phosphate and D-lactate. The protein is N-acetylmuramic acid 6-phosphate etherase of Bacteroides fragilis (strain YCH46).